We begin with the raw amino-acid sequence, 554 residues long: 3-(3-hydroxy-phenyl)propionate/3-hydroxycinnamic acid hydroxylase (554 aa).

Residues 17-46 (QVAI…VVEK) and 285-295 (FRIDRVLLAGD) each bind FAD.

Belongs to the PheA/TfdB FAD monooxygenase family. Requires FAD as cofactor.

The catalysed reaction is 3-(3-hydroxyphenyl)propanoate + NADH + O2 + H(+) = 3-(2,3-dihydroxyphenyl)propanoate + NAD(+) + H2O. The enzyme catalyses (2E)-3-(3-hydroxyphenyl)prop-2-enoate + NADH + O2 + H(+) = (2E)-3-(2,3-dihydroxyphenyl)prop-2-enoate + NAD(+) + H2O. The protein operates within aromatic compound metabolism; 3-phenylpropanoate degradation. Catalyzes the insertion of one atom of molecular oxygen into position 2 of the phenyl ring of 3-(3-hydroxyphenyl)propionate (3-HPP) and hydroxycinnamic acid (3HCI). The polypeptide is 3-(3-hydroxy-phenyl)propionate/3-hydroxycinnamic acid hydroxylase (Escherichia coli O81 (strain ED1a)).